Consider the following 404-residue polypeptide: Transcription factor sem-2 (404 aa).

A DNA-binding region (HMG box) is located at residues 93-161 (IKRPMNAFMV…CHMQEYPDYK (69 aa)). 2 disordered regions span residues 158 to 218 (PDYK…QFQN) and 321 to 359 (HTSP…NSAG). Positions 177–199 (QQPAQPQAPQQQQAPPRGASPQA) are enriched in low complexity. 2 stretches are compositionally biased toward polar residues: residues 207–218 (TDQQSETQQFQN) and 347–359 (ASEQ…NSAG).

It is found in the nucleus. Probable transcription factor required for embryogenesis, vulval development and cell fate specification of the postembryonic mesoderm (also known as the M lineage). Specifically, required for the specification of sex myoblast cells and their development into the muscles that are necessary for egg-laying. In addition, may be involved in RME GABAergic motor neuron progenitor cell fate specification. In Caenorhabditis elegans, this protein is Transcription factor sem-2.